Consider the following 198-residue polypeptide: Probable GTP-binding protein EngB (198 aa).

The region spanning 27-198 (DLPEVALAGR…ESWDTILSEL (172 aa)) is the EngB-type G domain. GTP contacts are provided by residues 35 to 42 (GRSNVGKS), 62 to 66 (GKTQL), 80 to 83 (DVPG), 147 to 150 (TKAD), and 179 to 181 (FSS). Mg(2+) contacts are provided by Ser-42 and Thr-64.

Belongs to the TRAFAC class TrmE-Era-EngA-EngB-Septin-like GTPase superfamily. EngB GTPase family. Mg(2+) is required as a cofactor.

Necessary for normal cell division and for the maintenance of normal septation. This Streptococcus agalactiae serotype III (strain NEM316) protein is Probable GTP-binding protein EngB.